A 761-amino-acid polypeptide reads, in one-letter code: Coenzyme PQQ synthesis protein F (761 aa).

His-49 is a binding site for Zn(2+). Glu-52 serves as the catalytic Proton acceptor. Zn(2+) contacts are provided by His-53 and Glu-130.

This sequence belongs to the peptidase M16 family. Zn(2+) serves as cofactor.

The protein operates within cofactor biosynthesis; pyrroloquinoline quinone biosynthesis. Functionally, required for coenzyme pyrroloquinoline quinone (PQQ) biosynthesis. It is thought that this protein is a protease that cleaves peptides bond in a small peptide (gene pqqA), providing the glutamate and tyrosine residues which are necessary for the synthesis of PQQ. This chain is Coenzyme PQQ synthesis protein F (pqqF), found in Klebsiella pneumoniae.